The sequence spans 153 residues: Putative pre-16S rRNA nuclease (153 aa).

It belongs to the YqgF nuclease family.

Its subcellular location is the cytoplasm. Its function is as follows. Could be a nuclease involved in processing of the 5'-end of pre-16S rRNA. The protein is Putative pre-16S rRNA nuclease of Prochlorococcus marinus (strain SARG / CCMP1375 / SS120).